Consider the following 212-residue polypeptide: Glycerol-3-phosphate acyltransferase (212 aa).

5 consecutive transmembrane segments (helical) span residues 3-23, 51-71, 78-98, 115-135, and 139-159; these read ILLA…VVVS, KAAI…VWLA, DVAV…PVFF, AVHP…AFFF, and SLAA…LFGT.

This sequence belongs to the PlsY family. In terms of assembly, probably interacts with PlsX.

It localises to the cell inner membrane. The catalysed reaction is an acyl phosphate + sn-glycerol 3-phosphate = a 1-acyl-sn-glycero-3-phosphate + phosphate. Its pathway is lipid metabolism; phospholipid metabolism. Functionally, catalyzes the transfer of an acyl group from acyl-phosphate (acyl-PO(4)) to glycerol-3-phosphate (G3P) to form lysophosphatidic acid (LPA). This enzyme utilizes acyl-phosphate as fatty acyl donor, but not acyl-CoA or acyl-ACP. This Burkholderia ambifaria (strain MC40-6) protein is Glycerol-3-phosphate acyltransferase.